The following is a 497-amino-acid chain: Casein kinase I isoform delta (497 aa).

2 disordered regions span residues 1–58 (MATM…EEMN) and 86–109 (PIQQ…HPTQ). Over residues 14–34 (WHNNTSTPMDTTEPATNSHNP) the composition is skewed to polar residues. Residues 88–105 (QQHQQPPLLQQAQPSQIP) show a composition bias toward low complexity. In terms of domain architecture, Protein kinase spans 191–458 (FRLGRKIGSG…YLRNLFRTLF (268 aa)). Residues 197-205 (IGSGSFGDI) and K220 contribute to the ATP site. D310 serves as the catalytic Proton acceptor.

This sequence belongs to the protein kinase superfamily. CK1 Ser/Thr protein kinase family. Casein kinase I subfamily. As to quaternary structure, monomer. In terms of tissue distribution, expressed throughout larval development and into the adult stage in both hypodermal seam cells and the hermaphrodite specific neuron.

The protein localises to the cytoplasm. Its subcellular location is the nucleus. It localises to the chromosome. It is found in the centromere. The protein resides in the cell junction. The protein localises to the adherens junction. The catalysed reaction is L-seryl-[protein] + ATP = O-phospho-L-seryl-[protein] + ADP + H(+). The enzyme catalyses L-threonyl-[protein] + ATP = O-phospho-L-threonyl-[protein] + ADP + H(+). Exhibits substrate-dependent heparin activation. Essential serine/threonine-protein kinase that regulates diverse cellular growth and survival processes including Wnt signaling, DNA repair and circadian rhythms. Casein kinases are operationally defined by their preferential utilization of acidic proteins. Positively regulates the expression of components of the heterochronic pathway, which regulate developmental timing, such as the transcriptional repressor lin-42 and microRNAs such as let-7. Negatively regulates cell cycle exit and cell fusion to prevent the premature differentiation of hypodermal seam cells into adult cells. Plays a role in regulating axon branching and subsequently, the maturation of the nervous system, most likely by preventing the premature termination of transcripts for proteins such as Ankyrin/unc-44, which are required for maintaining the nervous system. May phosphorylate ssup-72 to promote nervous system maturation. The polypeptide is Casein kinase I isoform delta (Caenorhabditis elegans).